Here is a 242-residue protein sequence, read N- to C-terminus: Pyridoxine 5'-phosphate synthase (242 aa).

Asn-6 provides a ligand contact to 3-amino-2-oxopropyl phosphate. 8–9 (DH) provides a ligand contact to 1-deoxy-D-xylulose 5-phosphate. Arg-17 contacts 3-amino-2-oxopropyl phosphate. His-42 acts as the Proton acceptor in catalysis. Positions 44 and 49 each coordinate 1-deoxy-D-xylulose 5-phosphate. Glu-69 serves as the catalytic Proton acceptor. Thr-99 serves as a coordination point for 1-deoxy-D-xylulose 5-phosphate. The Proton donor role is filled by His-190. 3-amino-2-oxopropyl phosphate-binding positions include Gly-191 and 212-213 (GH).

It belongs to the PNP synthase family. As to quaternary structure, homooctamer; tetramer of dimers.

The protein resides in the cytoplasm. It carries out the reaction 3-amino-2-oxopropyl phosphate + 1-deoxy-D-xylulose 5-phosphate = pyridoxine 5'-phosphate + phosphate + 2 H2O + H(+). The protein operates within cofactor biosynthesis; pyridoxine 5'-phosphate biosynthesis; pyridoxine 5'-phosphate from D-erythrose 4-phosphate: step 5/5. Its function is as follows. Catalyzes the complicated ring closure reaction between the two acyclic compounds 1-deoxy-D-xylulose-5-phosphate (DXP) and 3-amino-2-oxopropyl phosphate (1-amino-acetone-3-phosphate or AAP) to form pyridoxine 5'-phosphate (PNP) and inorganic phosphate. The sequence is that of Pyridoxine 5'-phosphate synthase from Neisseria meningitidis serogroup B (strain ATCC BAA-335 / MC58).